We begin with the raw amino-acid sequence, 86 residues long: Cell division topological specificity factor (86 aa).

This sequence belongs to the MinE family.

Its function is as follows. Prevents the cell division inhibition by proteins MinC and MinD at internal division sites while permitting inhibition at polar sites. This ensures cell division at the proper site by restricting the formation of a division septum at the midpoint of the long axis of the cell. The sequence is that of Cell division topological specificity factor from Rhizobium johnstonii (strain DSM 114642 / LMG 32736 / 3841) (Rhizobium leguminosarum bv. viciae).